The primary structure comprises 268 residues: Ribosomal RNA small subunit methyltransferase A (268 aa).

Positions 18, 20, 45, 66, 91, and 112 each coordinate S-adenosyl-L-methionine.

The protein belongs to the class I-like SAM-binding methyltransferase superfamily. rRNA adenine N(6)-methyltransferase family. RsmA subfamily.

The protein resides in the cytoplasm. The enzyme catalyses adenosine(1518)/adenosine(1519) in 16S rRNA + 4 S-adenosyl-L-methionine = N(6)-dimethyladenosine(1518)/N(6)-dimethyladenosine(1519) in 16S rRNA + 4 S-adenosyl-L-homocysteine + 4 H(+). Specifically dimethylates two adjacent adenosines (A1518 and A1519) in the loop of a conserved hairpin near the 3'-end of 16S rRNA in the 30S particle. May play a critical role in biogenesis of 30S subunits. The sequence is that of Ribosomal RNA small subunit methyltransferase A from Shewanella oneidensis (strain ATCC 700550 / JCM 31522 / CIP 106686 / LMG 19005 / NCIMB 14063 / MR-1).